The sequence spans 253 residues: Flagellar brake protein YcgR (253 aa).

One can recognise a PilZ domain in the interval Gln-120 to Tyr-239.

It belongs to the YcgR family. As to quaternary structure, monomer. Interacts with the flagellar basal bodies.

The protein resides in the bacterial flagellum basal body. In terms of biological role, acts as a flagellar brake, regulating swimming and swarming in a bis-(3'-5') cyclic diguanylic acid (c-di-GMP)-dependent manner. Binds 1 c-di-GMP dimer per subunit. Increasing levels of c-di-GMP lead to decreased motility. The chain is Flagellar brake protein YcgR from Methylotenera mobilis (strain JLW8 / ATCC BAA-1282 / DSM 17540).